Consider the following 209-residue polypeptide: Redox-sensing transcriptional repressor Rex (209 aa).

The segment at residues 16–55 (LYYRFIQNLSLSGKQRVSSAELSEAVKVDSATIRRDFSYF) is a DNA-binding region (H-T-H motif). 90–95 (GVGNLG) lines the NAD(+) pocket.

The protein belongs to the transcriptional regulatory Rex family. In terms of assembly, homodimer.

The protein localises to the cytoplasm. Its function is as follows. Modulates transcription in response to changes in cellular NADH/NAD(+) redox state. The protein is Redox-sensing transcriptional repressor Rex of Bacillus mycoides (strain KBAB4) (Bacillus weihenstephanensis).